A 271-amino-acid chain; its full sequence is MAGPQQQPPYLHLAELTATQFLEIWKHFDADGNGYIEGKELENFFQELEKARKGSGMVSKSDNLGEKMKEFMQKYDKNSDGKIEMAELAQILPTEENFLLCFRQHVGSSTEFMEAWRKYDTDRSGYIEANELKGFLSDLLKKANRPYDEPKLQEYTQTILRMFDLNGDGKLGLSEMSRLLPVQENFLLKFQGMKLTSEEFNAIFTFYDKDGSGYIDENELDALLKDLYEKNKKEMNIQQLTSYRKSVMSLAEAEKLYRKDLEIVLCSEPPL.

6 consecutive EF-hand domains span residues 16 to 51 (LTAT…LEKA), 63 to 98 (NLGE…EENF), 107 to 142 (GSST…LLKK), 151 to 186 (KLQE…QENF), 195 to 230 (LTSE…LYEK), and 235 to 270 (MNIQ…SEPP). Aspartate 29, aspartate 31, asparagine 33, tyrosine 35, glutamate 40, aspartate 76, asparagine 78, aspartate 80, lysine 82, glutamate 87, aspartate 120, aspartate 122, serine 124, tyrosine 126, glutamate 131, aspartate 164, asparagine 166, aspartate 168, lysine 170, glutamate 175, aspartate 208, aspartate 210, serine 212, tyrosine 214, and glutamate 219 together coordinate Ca(2+). Position 214 is a phosphotyrosine (tyrosine 214).

Belongs to the calbindin family.

The protein resides in the synapse. It is found in the cell projection. The protein localises to the dendrite. Calcium-binding protein involved in calcium homeostasis and signal transduction. It plays a critical role in buffering intracellular calcium levels and modulating calcium-dependent signaling pathways. Predominantly expressed in specific neuronal populations, influences synaptic plasticity and neuronal excitability, contributing to learning and memory. During embryonic development, it facilitates neuronal differentiation and maturation. The protein is Calretinin (CALB2) of Bos taurus (Bovine).